The following is a 235-amino-acid chain: uncharacterized protein (235 aa).

This is an uncharacterized protein from Salmonella typhimurium (strain LT2 / SGSC1412 / ATCC 700720).